The primary structure comprises 134 residues: uncharacterized protein (134 aa).

A signal peptide spans 1 to 26; the sequence is MRLYKAMALCLPLVVICTSEVSQSTA. The segment at 77-98 is disordered; the sequence is GEKNEEVAGPVDGEGSEEEAFD.

This is an uncharacterized protein from Encephalitozoon cuniculi (strain GB-M1) (Microsporidian parasite).